A 184-amino-acid chain; its full sequence is MEGSEEHGETSKAPLSRGVSKGVSILDVILRFVAIIGTLASAIAMGTTNQTLPFFTQFIRFKAQYSDLPTLTFFVVANSIVSAYLILSLPLSIVHVIRSRAKYSRLILIFFDAAMLALVTAGASAAAAIVYLAHKGNARANWLAICQQFDSFCERISGSLIGSFAAMVVLVLLIFLSAIALARR.

Residues 1-24 (MEGSEEHGETSKAPLSRGVSKGVS) are Cytoplasmic-facing. Residues 25-45 (ILDVILRFVAIIGTLASAIAM) traverse the membrane as a helical segment. The Extracellular segment spans residues 46 to 72 (GTTNQTLPFFTQFIRFKAQYSDLPTLT). Residue N49 is glycosylated (N-linked (GlcNAc...) asparagine). Residues 73-93 (FFVVANSIVSAYLILSLPLSI) traverse the membrane as a helical segment. The Cytoplasmic segment spans residues 94–105 (VHVIRSRAKYSR). Residues 106–126 (LILIFFDAAMLALVTAGASAA) traverse the membrane as a helical segment. The Extracellular segment spans residues 127–159 (AAIVYLAHKGNARANWLAICQQFDSFCERISGS). The helical transmembrane segment at 160–180 (LIGSFAAMVVLVLLIFLSAIA) threads the bilayer. The Cytoplasmic portion of the chain corresponds to 181–184 (LARR).

Belongs to the Casparian strip membrane proteins (CASP) family. Homodimer and heterodimers.

Its subcellular location is the cell membrane. Regulates membrane-cell wall junctions and localized cell wall deposition. Required for establishment of the Casparian strip membrane domain (CSD) and the subsequent formation of Casparian strips, a cell wall modification of the root endodermis that determines an apoplastic barrier between the intraorganismal apoplasm and the extraorganismal apoplasm and prevents lateral diffusion. The sequence is that of Casparian strip membrane protein 3 from Oryza sativa subsp. indica (Rice).